Reading from the N-terminus, the 467-residue chain is tRNA modification GTPase MnmE (467 aa).

3 residues coordinate (6S)-5-formyl-5,6,7,8-tetrahydrofolate: R27, E89, and R128. Residues 225–387 (GISMVIAGRP…LKQAIFTVVT (163 aa)) form the TrmE-type G domain. N235 serves as a coordination point for K(+). GTP is bound by residues 235–240 (NVGKSS), 254–260 (TSIAGTT), 279–282 (DTAG), and 368–370 (SAR). Residue S239 coordinates Mg(2+). K(+) is bound by residues T254, I256, and T259. T260 serves as a coordination point for Mg(2+). Residue K467 participates in (6S)-5-formyl-5,6,7,8-tetrahydrofolate binding.

This sequence belongs to the TRAFAC class TrmE-Era-EngA-EngB-Septin-like GTPase superfamily. TrmE GTPase family. As to quaternary structure, homodimer. Heterotetramer of two MnmE and two MnmG subunits. The cofactor is K(+).

The protein resides in the cytoplasm. In terms of biological role, exhibits a very high intrinsic GTPase hydrolysis rate. Involved in the addition of a carboxymethylaminomethyl (cmnm) group at the wobble position (U34) of certain tRNAs, forming tRNA-cmnm(5)s(2)U34. The polypeptide is tRNA modification GTPase MnmE (Desulfotalea psychrophila (strain LSv54 / DSM 12343)).